The following is a 58-amino-acid chain: Small ribosomal subunit protein bS21 (58 aa).

The protein belongs to the bacterial ribosomal protein bS21 family.

This is Small ribosomal subunit protein bS21 from Synechococcus sp. (strain CC9605).